Reading from the N-terminus, the 63-residue chain is Large ribosomal subunit protein bL28 (63 aa).

The protein belongs to the bacterial ribosomal protein bL28 family.

The protein is Large ribosomal subunit protein bL28 of Mycoplasmopsis synoviae (strain 53) (Mycoplasma synoviae).